Consider the following 388-residue polypeptide: Pre-mRNA-splicing factor cwf2 (388 aa).

Residues 43–63 (VKRKKQPARKQIETRPEYEME) form a disordered region. The segment at 111–138 (NPGSFFCLYFARGMCSEGSKCEYLHRLP) adopts a C3H1-type zinc-finger fold. One can recognise an RRM domain in the interval 174–248 (YTLYVGGITP…ECLNVRWATT (75 aa)). A disordered region spans residues 331 to 352 (PNKSQSEEGSNDDHKSVTTTES).

Belongs to the RRM CWC2 family. As to quaternary structure, belongs to the 40S cdc5-associated complex (or cwf complex), a spliceosome sub-complex reminiscent of a late-stage spliceosome composed of the U2, U5 and U6 snRNAs and at least brr2, cdc5, cwf2/prp3, cwf3/syf1, cwf4/syf3, cwf5/ecm2, spp42/cwf6, cwf7/spf27, cwf8, cwf9, cwf10, cwf11, cwf12, prp45/cwf13, cwf14, cwf15, cwf16, cwf17, cwf18, cwf19, cwf20, cwf21, cwf22, cwf23, cwf24, cwf25, cwf26, cyp7/cwf27, cwf28, cwf29/ist3, lea1, msl1, prp5/cwf1, prp10, prp12/sap130, prp17, prp22, sap61, sap62, sap114, sap145, slu7, smb1, smd1, smd3, smf1, smg1 and syf2.

It localises to the nucleus. Involved in the first step of pre-mRNA splicing. Required for cell growth and cell cycle control. Plays a role in the levels of the U1, U4, U5 and U6 snRNAs and the maintenance of the U4/U6 snRNA complex. May provide the link between the 'nineteen complex' NTC spliceosome protein complex and the spliceosome through the U6 snRNA. Associates predominantly with U6 snRNAs in assembled active spliceosomes. Binds directly to the internal stem-loop (ISL) domain of the U6 snRNA and to the pre-mRNA intron near the 5' splice site during the activation and catalytic phases of the spliceosome cycle. Involved in pre-mRNA splicing. The protein is Pre-mRNA-splicing factor cwf2 (cwf2) of Schizosaccharomyces pombe (strain 972 / ATCC 24843) (Fission yeast).